Here is a 1176-residue protein sequence, read N- to C-terminus: MDNNPNINECIPYNCLSNPEVEVLGGERIETGYTPIDISLSLTQFLLSEFVPGAGFVLGLVDIIWGIFGPSQWDAFLVQIEQLINQRIEEFARNQAISRLEGLSNLYQIYAESFREWEADPTNPALREEMRIQFNDMNSALTTAIPLLAVQNYQVPLLSVYVQAANLHLSVLRDVSVFGQRWGFDAATINSRYNDLTRLIGNYTDYAVRWYNTGLERVWGPDSRDWVRYNQFRRELTLTVLDIVALFSNYDSRRYPIRTVSQLTREIYTNPVLENFDGSFRGMAQRIEPEYRQPHLMDILNSISIYTDVHRGFNYWSGHQITTSPVGFSGPEFTFPLYGTYGNAAPPQRIAQTGLGIFRTLSSPLYRRIILGSGPNNQELFVLDGTEFSFASLTTNLPSTIYRQRGTVDSLDVIPPQDNSVPPRAGFSHRLSHVPMLSQAAGAVYTLRASLFLLLVLLIHARSIFNNIIPSSQITQSFKKIISWTSVVKGPGFTGGDILRRPSPGLISTLRVNITAPLSQRYRVRIRYAFTTNLQFLTSIDGRPINQGNFYATMSSGSNLQSGSFRTVGFTTPFNFSNGSSVFTLSAHVFNSGNEVYIDRIEFVPAEVTFEAEYDLERAQNGVNQLFTSSNQIGLKTDGTDYHIDQVSNLVECLSDEFCLDEKQELSEKVKHAKRLSDERNLLQDPNFRGINRQLDRGWRGSHDITIQGGDDVFKENYVTLLGTFDECYPTYLYQKIDQSKLKAYTSYQLRGYIEDSQDLEIYLIGYNAKQQTVNVPGTGSLWPVYAPKPIGKCGEPNRCAPHLEWNPDLDCSCRDGEKCAHHSLHFSIDIDVGCTDLNEDLGVWVIFKIKTEDGHARLGNLEFLEEKPLVGEALARVKRAEKKWRDKRVKLEWETNIVYKEAKESVDALFVNSQYDQLQADTNIAMIHAADKRVHSIREAYLPELSVIPGVNAAIFEELEGRIFTAFSLYDARNVIKNGDFNNGLSCWNVKGHVDVEEQNNQRSVLVVPEWEAEVSQEVRVCPGRGYFPRVTAYKEGYGEGCVTIHEIENNTDELKFSNCVEEEIYPNNTVTCNDYTVNQEEYGGAYTSRNRGYNEAPSVPADYASVYEEKSYTDGRRENPCEFNRGYRDYTGLPVGYVTKALEYFPETDKVWIEIGETEGTFIVDSVELLLMEE.

The protein belongs to the delta endotoxin family.

In terms of biological role, promotes colloidosmotic lysis by binding to the midgut epithelial cells of many lepidopteran larvae. The polypeptide is Pesticidal crystal protein Cry1Ag (cry1Ag) (Bacillus thuringiensis).